The chain runs to 275 residues: Octanoyl-[GcvH]:protein N-octanoyltransferase (275 aa).

The 205-residue stretch at 42–246 folds into the BPL/LPL catalytic domain; sequence GQSQPVVRLW…ALQAFGSRLE (205 aa). Cys-145 serves as the catalytic Acyl-thioester intermediate.

The protein belongs to the octanoyltransferase LipL family.

It catalyses the reaction N(6)-octanoyl-L-lysyl-[glycine-cleavage complex H protein] + L-lysyl-[lipoyl-carrier protein] = N(6)-octanoyl-L-lysyl-[lipoyl-carrier protein] + L-lysyl-[glycine-cleavage complex H protein]. Its pathway is protein modification; protein lipoylation via endogenous pathway; protein N(6)-(lipoyl)lysine from octanoyl-[acyl-carrier-protein]. Functionally, catalyzes the amidotransfer (transamidation) of the octanoyl moiety from octanoyl-GcvH to the lipoyl domain of the E2 subunit of lipoate-dependent enzymes. This is Octanoyl-[GcvH]:protein N-octanoyltransferase from Anoxybacillus flavithermus (strain DSM 21510 / WK1).